The primary structure comprises 761 residues: Wall-associated receptor kinase-like 4 (761 aa).

Positions 1-26 (MKKETQNLQCIPLVISVLSLFGVSSA) are cleaved as a signal peptide. Residues 27 to 349 (RKPPYLCNRV…EPKKPGQIKP (323 aa)) are Extracellular-facing. Asn64, Asn166, Asn206, Asn226, and Asn262 each carry an N-linked (GlcNAc...) asparagine glycan. The segment at 278 to 339 (CVCSYGYFSG…CVNKPGWFTC (62 aa)) is atypical EGF-like. Cystine bridges form between Cys280/Cys293, Cys316/Cys330, and Cys325/Cys339. A helical membrane pass occupies residues 350–370 (VFQGVLIGSALLLFAFGIFGL). Residues 371–761 (YKFIKKQRRS…VEPLVPLRTW (391 aa)) are Cytoplasmic-facing. The Protein kinase domain maps to 424-697 (FNTNRVLGQG…REVSVELERI (274 aa)). ATP contacts are provided by residues 430–438 (LGQGGQGTV) and Lys452. The residue at position 497 (Tyr497) is a Phosphotyrosine. Asp549 functions as the Proton acceptor in the catalytic mechanism. Residues Thr583 and Thr588 each carry the phosphothreonine modification. Tyr596 carries the post-translational modification Phosphotyrosine. Residues 701–761 (SYKSEIHNDD…VEPLVPLRTW (61 aa)) are disordered. Residues 708-732 (NDDDDDDDDDDEDDQAMELNIEETW) show a composition bias toward acidic residues.

Belongs to the protein kinase superfamily. Ser/Thr protein kinase family. As to expression, expressed in the whole plant. Detected in root-shoot junctions and lateral root initiation sites.

It localises to the membrane. The enzyme catalyses L-seryl-[protein] + ATP = O-phospho-L-seryl-[protein] + ADP + H(+). The catalysed reaction is L-threonyl-[protein] + ATP = O-phospho-L-threonyl-[protein] + ADP + H(+). Functionally, serine/threonine-protein kinase that may function as a signaling receptor of extracellular matrix component. Plays a role in plant mineral nutrients response. This chain is Wall-associated receptor kinase-like 4 (WAKL4), found in Arabidopsis thaliana (Mouse-ear cress).